The sequence spans 540 residues: Glucose-6-phosphate isomerase (540 aa).

The active-site Proton donor is Glu-350. Active-site residues include His-381 and Lys-503.

This sequence belongs to the GPI family.

It localises to the cytoplasm. It carries out the reaction alpha-D-glucose 6-phosphate = beta-D-fructose 6-phosphate. The protein operates within carbohydrate biosynthesis; gluconeogenesis. It participates in carbohydrate degradation; glycolysis; D-glyceraldehyde 3-phosphate and glycerone phosphate from D-glucose: step 2/4. Its function is as follows. Catalyzes the reversible isomerization of glucose-6-phosphate to fructose-6-phosphate. The protein is Glucose-6-phosphate isomerase of Burkholderia orbicola (strain MC0-3).